Here is a 303-residue protein sequence, read N- to C-terminus: Probable endonuclease 4 (303 aa).

H78, H118, E154, D188, H191, H222, D235, H237, and E267 together coordinate Zn(2+).

The protein belongs to the AP endonuclease 2 family. Zn(2+) is required as a cofactor.

The catalysed reaction is Endonucleolytic cleavage to 5'-phosphooligonucleotide end-products.. In terms of biological role, endonuclease IV plays a role in DNA repair. It cleaves phosphodiester bonds at apurinic or apyrimidinic (AP) sites, generating a 3'-hydroxyl group and a 5'-terminal sugar phosphate. This is Probable endonuclease 4 from Mycoplasmoides gallisepticum (strain R(low / passage 15 / clone 2)) (Mycoplasma gallisepticum).